The primary structure comprises 151 residues: Aspartate carbamoyltransferase regulatory chain (151 aa).

Zn(2+) contacts are provided by Cys-107, Cys-112, Cys-135, and Cys-138.

It belongs to the PyrI family. Contains catalytic and regulatory chains. The cofactor is Zn(2+).

Functionally, involved in allosteric regulation of aspartate carbamoyltransferase. This Thermococcus gammatolerans (strain DSM 15229 / JCM 11827 / EJ3) protein is Aspartate carbamoyltransferase regulatory chain.